The primary structure comprises 426 residues: 3-phosphoshikimate 1-carboxyvinyltransferase (426 aa).

3-phosphoshikimate is bound by residues lysine 23, serine 24, and arginine 28. A phosphoenolpyruvate-binding site is contributed by lysine 23. Phosphoenolpyruvate-binding residues include glycine 96 and arginine 124. Positions 170, 171, 172, 198, 314, and 341 each coordinate 3-phosphoshikimate. Glutamine 172 is a phosphoenolpyruvate binding site. Residue aspartate 314 is the Proton acceptor of the active site. The phosphoenolpyruvate site is built by arginine 345, arginine 386, and lysine 411.

This sequence belongs to the EPSP synthase family. Monomer.

It localises to the cytoplasm. It catalyses the reaction 3-phosphoshikimate + phosphoenolpyruvate = 5-O-(1-carboxyvinyl)-3-phosphoshikimate + phosphate. The protein operates within metabolic intermediate biosynthesis; chorismate biosynthesis; chorismate from D-erythrose 4-phosphate and phosphoenolpyruvate: step 6/7. Its function is as follows. Catalyzes the transfer of the enolpyruvyl moiety of phosphoenolpyruvate (PEP) to the 5-hydroxyl of shikimate-3-phosphate (S3P) to produce enolpyruvyl shikimate-3-phosphate and inorganic phosphate. The chain is 3-phosphoshikimate 1-carboxyvinyltransferase from Nostoc punctiforme (strain ATCC 29133 / PCC 73102).